A 346-amino-acid polypeptide reads, in one-letter code: Protein RecA (346 aa).

67–74 contacts ATP; the sequence is GPESSGKT.

It belongs to the RecA family.

The protein localises to the cytoplasm. Its function is as follows. Can catalyze the hydrolysis of ATP in the presence of single-stranded DNA, the ATP-dependent uptake of single-stranded DNA by duplex DNA, and the ATP-dependent hybridization of homologous single-stranded DNAs. It interacts with LexA causing its activation and leading to its autocatalytic cleavage. This Mycobacteroides abscessus (strain ATCC 19977 / DSM 44196 / CCUG 20993 / CIP 104536 / JCM 13569 / NCTC 13031 / TMC 1543 / L948) (Mycobacterium abscessus) protein is Protein RecA.